We begin with the raw amino-acid sequence, 337 residues long: MATIKDVAKLAAVSTTTVSHVINKTRFVAEATQKRVWEAVEELNYAPSAVARSLKCNTTRTIGMLVTQSFNPFFAEVMHGVENYCYKQGYTLFMCNTEGDLEKQKHYLRMLAEKRVDGLLVMCSDLNEQLLTLLEKNTELPMVIMDWGPDSPRTDKIIDNSEEGGYLATKHLIENGHTHIACITGQADKVTCKERVRGFERAHIDANLTFNPEWILEGDFECASASRAVDKILAIEENKRPTALFCFNDIMALAAISKIQQSGLRVPEDISVIGYDNIELSAYFSPPLTTIHQPKRRVGKTAVEILLERIKDKDHERRVFEMQPEVVTRSSVSNRLK.

The HTH lacI-type domain occupies A2–C56. Residues I4 to N23 constitute a DNA-binding region (H-T-H motif). Residues S48 to C56 mediate DNA binding. Hypoxanthine-binding residues include F73, K189, T191, F220, and D276.

As to quaternary structure, homodimer.

Its pathway is purine metabolism; purine nucleotide biosynthesis [regulation]. In terms of biological role, is the main repressor of the genes involved in the de novo synthesis of purine nucleotides, regulating purB, purC, purEK, purF, purHD, purL, purMN and guaBA expression. PurR is allosterically activated to bind its cognate DNA by binding the purine corepressors, hypoxanthine or guanine, thereby effecting transcription repression. The polypeptide is HTH-type transcriptional repressor PurR (Aliivibrio fischeri (strain ATCC 700601 / ES114) (Vibrio fischeri)).